We begin with the raw amino-acid sequence, 181 residues long: uncharacterized protein (181 aa).

The region spanning 35–175 (LRHRCVFVWA…ARLRAWRGAS (141 aa)) is the Nudix hydrolase domain. The Nudix box signature appears at 72-94 (GGVVGAGESYDDAALREAEEELG). Positions 88 and 92 each coordinate Mg(2+).

This sequence belongs to the Nudix hydrolase family. Mg(2+) is required as a cofactor.

This is an uncharacterized protein from Streptomyces coelicolor (strain ATCC BAA-471 / A3(2) / M145).